The following is a 94-amino-acid chain: Defensin-like protein 21 (94 aa).

The signal sequence occupies residues 1 to 26 (MVRTNVVSFVLFAAIVLCIGSIQIDG). 4 disulfides stabilise this stretch: C41/C92, C51/C79, C65/C88, and C69/C90.

The protein belongs to the DEFL family.

Its subcellular location is the secreted. The sequence is that of Defensin-like protein 21 from Arabidopsis thaliana (Mouse-ear cress).